The chain runs to 844 residues: Beta-mannosidase B (844 aa).

The active-site Proton donor is Glu-432.

This sequence belongs to the glycosyl hydrolase 2 family. Beta-mannosidase B subfamily.

The catalysed reaction is Hydrolysis of terminal, non-reducing beta-D-mannose residues in beta-D-mannosides.. Its pathway is glycan metabolism; N-glycan degradation. In terms of biological role, exoglycosidase that cleaves the single beta-linked mannose residue from the non-reducing end of beta-mannosidic oligosaccharides of various complexity and length. Prefers mannobiose over mannotriose and has no activity against polymeric mannan. Is also severely restricted by galactosyl substitutions at the +1 subsite. The chain is Beta-mannosidase B (mndB) from Aspergillus oryzae (strain ATCC 42149 / RIB 40) (Yellow koji mold).